The chain runs to 320 residues: Short-chain dehydrogenase TIC 32 A, chloroplastic (320 aa).

Residues 40-46 (GGTSGIG), 92-93 (DL), Asn-119, and Thr-140 each bind NADP(+). Substrate is bound at residue Ser-174. Tyr-196 serves as the catalytic Proton acceptor. Positions 301-317 (DTTLADKLWDFSIKLVE) are interaction with calmodulin.

This sequence belongs to the short-chain dehydrogenases/reductases (SDR) family. Part of the Tic complex. Expressed in the dehiscence zone of developing pods.

The protein resides in the plastid. The protein localises to the chloroplast inner membrane. Functionally, involved in protein precursor import into chloroplasts. Maybe involved in pod abscission or dehiscence (pod shatter). This chain is Short-chain dehydrogenase TIC 32 A, chloroplastic, found in Brassica napus (Rape).